Reading from the N-terminus, the 452-residue chain is 2-succinylbenzoate--CoA ligase (452 aa).

This sequence belongs to the ATP-dependent AMP-binding enzyme family. MenE subfamily.

It carries out the reaction 2-succinylbenzoate + ATP + CoA = 2-succinylbenzoyl-CoA + AMP + diphosphate. It participates in quinol/quinone metabolism; 1,4-dihydroxy-2-naphthoate biosynthesis; 1,4-dihydroxy-2-naphthoate from chorismate: step 5/7. Its pathway is quinol/quinone metabolism; menaquinone biosynthesis. Converts 2-succinylbenzoate (OSB) to 2-succinylbenzoyl-CoA (OSB-CoA). The polypeptide is 2-succinylbenzoate--CoA ligase (Haemophilus influenzae (strain ATCC 51907 / DSM 11121 / KW20 / Rd)).